The primary structure comprises 388 residues: Succinate--CoA ligase [ADP-forming] subunit beta (388 aa).

Residues K46, 53–55 (GRG), E99, C102, and E107 contribute to the ATP site. Mg(2+) contacts are provided by N199 and D213. Substrate contacts are provided by residues N264 and 321–323 (GIV).

This sequence belongs to the succinate/malate CoA ligase beta subunit family. As to quaternary structure, heterotetramer of two alpha and two beta subunits. It depends on Mg(2+) as a cofactor.

The catalysed reaction is succinate + ATP + CoA = succinyl-CoA + ADP + phosphate. It carries out the reaction GTP + succinate + CoA = succinyl-CoA + GDP + phosphate. Its pathway is carbohydrate metabolism; tricarboxylic acid cycle; succinate from succinyl-CoA (ligase route): step 1/1. Its function is as follows. Succinyl-CoA synthetase functions in the citric acid cycle (TCA), coupling the hydrolysis of succinyl-CoA to the synthesis of either ATP or GTP and thus represents the only step of substrate-level phosphorylation in the TCA. The beta subunit provides nucleotide specificity of the enzyme and binds the substrate succinate, while the binding sites for coenzyme A and phosphate are found in the alpha subunit. The protein is Succinate--CoA ligase [ADP-forming] subunit beta of Actinobacillus pleuropneumoniae serotype 5b (strain L20).